Here is a 101-residue protein sequence, read N- to C-terminus: NADH-quinone oxidoreductase subunit K (101 aa).

3 consecutive transmembrane segments (helical) span residues 4-24 (LAHY…GIFL), 29-49 (IIII…NFVA), and 61-81 (IFVF…LAIL).

It belongs to the complex I subunit 4L family. In terms of assembly, NDH-1 is composed of 14 different subunits. Subunits NuoA, H, J, K, L, M, N constitute the membrane sector of the complex.

It localises to the cell inner membrane. The enzyme catalyses a quinone + NADH + 5 H(+)(in) = a quinol + NAD(+) + 4 H(+)(out). In terms of biological role, NDH-1 shuttles electrons from NADH, via FMN and iron-sulfur (Fe-S) centers, to quinones in the respiratory chain. The immediate electron acceptor for the enzyme in this species is believed to be ubiquinone. Couples the redox reaction to proton translocation (for every two electrons transferred, four hydrogen ions are translocated across the cytoplasmic membrane), and thus conserves the redox energy in a proton gradient. This chain is NADH-quinone oxidoreductase subunit K, found in Burkholderia ambifaria (strain MC40-6).